A 271-amino-acid polypeptide reads, in one-letter code: Plasmanylethanolamine desaturase 1 (271 aa).

3 helical membrane-spanning segments follow: residues tryptophan 48–leucine 68, proline 75–valine 95, and valine 162–phenylalanine 182. The short motif at histidine 187–histidine 191 is the Histidine box-1 element. Positions histidine 214 to histidine 218 match the Histidine box-2 motif.

Belongs to the fatty acid desaturase CarF family.

It localises to the endoplasmic reticulum membrane. The catalysed reaction is a 1-(1,2-saturated alkyl)-2-acyl-sn-glycero-3-phosphoethanolamine + 2 Fe(II)-[cytochrome b5] + O2 + 2 H(+) = a 1-O-(1Z-alkenyl)-2-acyl-sn-glycero-3-phosphoethanolamine + 2 Fe(III)-[cytochrome b5] + 2 H2O. The enzyme catalyses a 1-O-hexadecyl-2-acyl-sn-glycero-3-phosphoethanolamine + 2 Fe(II)-[cytochrome b5] + O2 + 2 H(+) = a 1-O-(1Z-hexadecenyl)-2-acyl-sn-glycero-3-phosphoethanolamine + 2 Fe(III)-[cytochrome b5] + 2 H2O. It carries out the reaction a 1-O-octadecyl-2-acyl-sn-glycero-3-phosphoethanolamine + 2 Fe(II)-[cytochrome b5] + O2 + 2 H(+) = a 1-O-(1Z-octadecenyl)-2-acyl-sn-glycero-3-phosphoethanolamine + 2 Fe(III)-[cytochrome b5] + 2 H2O. It catalyses the reaction a 1-O-(9Z-octadecenyl)-2-acyl-sn-glycero-3-phosphoethanolamine + 2 Fe(II)-[cytochrome b5] + O2 + 2 H(+) = a 1-O-(1Z,9Z-octadecadienyl)-2-acyl-sn-glycero-3-phosphoethanolamine + 2 Fe(III)-[cytochrome b5] + 2 H2O. It functions in the pathway lipid metabolism; fatty acid metabolism. Plasmanylethanolamine desaturase involved in plasmalogen biogenesis in the endoplasmic reticulum membrane. Plasmalogens are glycerophospholipids with a hydrocarbon chain linked by a vinyl ether bond at the glycerol sn-1 position, and are involved in antioxidative and signaling mechanisms. This Bos taurus (Bovine) protein is Plasmanylethanolamine desaturase 1.